The primary structure comprises 140 residues: Large ribosomal subunit protein bL17 (140 aa).

The protein belongs to the bacterial ribosomal protein bL17 family. Part of the 50S ribosomal subunit. Contacts protein L32.

This chain is Large ribosomal subunit protein bL17, found in Hyphomonas neptunium (strain ATCC 15444).